We begin with the raw amino-acid sequence, 454 residues long: Peroxisome assembly protein 10 (454 aa).

Topologically, residues 1–23 (MATQPPPARPPPPLTSSPYPYAA) are peroxisomal matrix. The chain crosses the membrane as a helical span at residues 24–53 (APDIIRAHQKDAYFQGVLANRLSDLHRRLR). G54 is a topological domain (cytoplasmic). A helical transmembrane segment spans residues 55 to 76 (ARSAHAWAAETRTFAAALYLCL). The Peroxisomal matrix portion of the chain corresponds to 77-132 (TTLLGNRTLGEEYCDLVQVEEAPSKLFASSSSKAADDHIYENGLGGGGDGGPLLPS). Residues 133–165 (LPRRAGYILTAIVLPHLASRALPSVRSAIRKRL) traverse the membrane as a helical segment. Residues 166–201 (QSRLATLSRRRQQTGTKSGSGRGGRGGGGGITEYRV) are Cytoplasmic-facing. The disordered stretch occupies residues 171 to 194 (TLSRRRQQTGTKSGSGRGGRGGGG). Gly residues predominate over residues 183-194 (SGSGRGGRGGGG). Residues 202-229 (LRYLLTHLTPLTSGAHFRAATLAVFYFT) form a helical membrane-spanning segment. Topologically, residues 230 to 276 (GAYYELSKWVWGLRYVFTTRAGRVVDDDHNRHHHSPQHGGGNGGRAG) are peroxisomal matrix. A helical transmembrane segment spans residues 277-296 (YEVLGVLLVVQMAVRAWLHV). Topologically, residues 297–454 (REQLSSGSVA…VQHILPLRAA (158 aa)) are cytoplasmic. A disordered region spans residues 302–329 (SGSVAGGGGEEEEDGEDGFRERTAFGPG). C402, C405, C417, H419, C422, C425, C436, and C439 together coordinate Zn(2+). The RING-type zinc-finger motif lies at 402 to 440 (CTLCLEELKDPAATQCGHVFCWACIGDWVREKPECPLCR).

It belongs to the pex2/pex10/pex12 family. Component of the PEX2-PEX10-PEX12 retrotranslocation channel, composed of PEX2, PEX10 and PEX12.

The protein localises to the peroxisome membrane. It carries out the reaction S-ubiquitinyl-[E2 ubiquitin-conjugating enzyme]-L-cysteine + [acceptor protein]-L-lysine = [E2 ubiquitin-conjugating enzyme]-L-cysteine + N(6)-ubiquitinyl-[acceptor protein]-L-lysine.. The protein operates within protein modification; protein ubiquitination. The E3 ubiquitin-protein ligase activity is stimulated by PEX12. Its function is as follows. E3 ubiquitin-protein ligase component of a retrotranslocation channel required for peroxisome organization by mediating export of the PEX5 receptor from peroxisomes to the cytosol, thereby promoting PEX5 recycling. The retrotranslocation channel is composed of PEX2, PEX10 and PEX12; each subunit contributing transmembrane segments that coassemble into an open channel that specifically allows the passage of PEX5 through the peroxisomal membrane. PEX10 also regulates PEX5 recycling by acting as a E3 ubiquitin-protein ligase. When PEX5 recycling is compromised, PEX10 catalyzes polyubiquitination of PEX5 during its passage through the retrotranslocation channel, leading to its degradation. This Thermothelomyces thermophilus (strain ATCC 42464 / BCRC 31852 / DSM 1799) (Sporotrichum thermophile) protein is Peroxisome assembly protein 10.